Reading from the N-terminus, the 442-residue chain is Magnesium transporter MRS2-1 (442 aa).

The segment at 1 to 30 (MSELKERLLPPRPASAMNLRDASVTRPSAS) is disordered. 2 consecutive transmembrane segments (helical) span residues 378–398 (LLLT…GIFG) and 414–434 (WVLI…VWFF). The Required for magnesium transport activity signature appears at 398-400 (GMN).

The protein belongs to the CorA metal ion transporter (MIT) (TC 1.A.35.5) family. Expressed in the whole plant except stems.

It localises to the membrane. In terms of biological role, magnesium transporter that may mediate the influx of magnesium. The protein is Magnesium transporter MRS2-1 (MRS2-1) of Arabidopsis thaliana (Mouse-ear cress).